Consider the following 118-residue polypeptide: UPF0295 protein BCE_0593 (118 aa).

The next 2 helical transmembrane spans lie at 12 to 32 (IRTF…LGVF) and 43 to 63 (FMMV…WIGM).

The protein belongs to the UPF0295 family.

The protein localises to the cell membrane. In Bacillus cereus (strain ATCC 10987 / NRS 248), this protein is UPF0295 protein BCE_0593.